The sequence spans 465 residues: ATP-dependent protease ATPase subunit HslU (465 aa).

ATP contacts are provided by residues Val19 and Gly61–Glu66. Residues Leu153 to Arg175 are disordered. Residues Asp279, Glu343, and Arg415 each coordinate ATP.

It belongs to the ClpX chaperone family. HslU subfamily. As to quaternary structure, a double ring-shaped homohexamer of HslV is capped on each side by a ring-shaped HslU homohexamer. The assembly of the HslU/HslV complex is dependent on binding of ATP.

The protein resides in the cytoplasm. In terms of biological role, ATPase subunit of a proteasome-like degradation complex; this subunit has chaperone activity. The binding of ATP and its subsequent hydrolysis by HslU are essential for unfolding of protein substrates subsequently hydrolyzed by HslV. HslU recognizes the N-terminal part of its protein substrates and unfolds these before they are guided to HslV for hydrolysis. This is ATP-dependent protease ATPase subunit HslU from Oceanobacillus iheyensis (strain DSM 14371 / CIP 107618 / JCM 11309 / KCTC 3954 / HTE831).